Reading from the N-terminus, the 120-residue chain is Ribosome-binding factor A (120 aa).

It belongs to the RbfA family. In terms of assembly, monomer. Binds 30S ribosomal subunits, but not 50S ribosomal subunits or 70S ribosomes.

It localises to the cytoplasm. In terms of biological role, one of several proteins that assist in the late maturation steps of the functional core of the 30S ribosomal subunit. Associates with free 30S ribosomal subunits (but not with 30S subunits that are part of 70S ribosomes or polysomes). Required for efficient processing of 16S rRNA. May interact with the 5'-terminal helix region of 16S rRNA. The sequence is that of Ribosome-binding factor A from Chlamydia pneumoniae (Chlamydophila pneumoniae).